The sequence spans 103 residues: Large ribosomal subunit protein uL24 (103 aa).

It belongs to the universal ribosomal protein uL24 family. Part of the 50S ribosomal subunit.

In terms of biological role, one of two assembly initiator proteins, it binds directly to the 5'-end of the 23S rRNA, where it nucleates assembly of the 50S subunit. Its function is as follows. One of the proteins that surrounds the polypeptide exit tunnel on the outside of the subunit. The protein is Large ribosomal subunit protein uL24 of Anoxybacillus flavithermus (strain DSM 21510 / WK1).